The sequence spans 756 residues: Anaphase-promoting complex subunit 5 (756 aa).

TPR repeat units lie at residues 301–334, 522–555, 581–614, and 678–711; these read RYAA…AQES, DGRY…KAQN, ISVL…SREY, and YSQQ…EQLR.

Belongs to the APC5 family. As to quaternary structure, the APC/C is composed of at least 12 subunits.

It localises to the nucleus. The protein localises to the cytoplasm. It is found in the cytoskeleton. Its subcellular location is the spindle. The protein operates within protein modification; protein ubiquitination. Functionally, component of the anaphase promoting complex/cyclosome (APC/C), a cell cycle-regulated E3 ubiquitin ligase that controls progression through mitosis and the G1 phase of the cell cycle. The APC/C complex acts by mediating ubiquitination and subsequent degradation of target proteins: it mainly mediates the formation of 'Lys-11'-linked polyubiquitin chains and, to a lower extent, the formation of 'Lys-48'- and 'Lys-63'-linked polyubiquitin chains. The APC/C complex catalyzes assembly of branched 'Lys-11'-/'Lys-48'-linked branched ubiquitin chains on target proteins. This Gallus gallus (Chicken) protein is Anaphase-promoting complex subunit 5 (ANAPC5).